The chain runs to 67 residues: UPF0434 protein Tcr_0959 (67 aa).

Belongs to the UPF0434 family.

The protein is UPF0434 protein Tcr_0959 of Hydrogenovibrio crunogenus (strain DSM 25203 / XCL-2) (Thiomicrospira crunogena).